Here is a 697-residue protein sequence, read N- to C-terminus: MAETSPEPSGQLVVHSDAHSDTVLASFEDQRKKGFLCDITLIVENVHFRAHKALLAASSEYFSMMFAEEGEIGQSIYMLEGMVADTFGILLEFIYTGYLHASEKSTEQILATAQFLKVYDLVKAYTDFQNNHSSPKPTTLNTAGAPVVVISNKKNDPPKRKRGRPKKVNTLQEEKSELAAEEEIQLRVNNSVQNRQNFVVKGDSGVLNEQIAAKEKEESEPTCEPSREEEMPVEKDENYDPKTEDGQASQSRYSKRRIWRSVKLKDYKLVGDQEDHGSAKRICGRRKRPGGPEARCKDCGKVFKYNHFLAIHQRSHTGERPFKCNECGKGFAQKHSLQVHTRMHTGERPYTCTVCSKALTTKHSLLEHMSLHSGQKSFTCDQCGKYFSQNRQLKSHYRVHTGHSLPECKDCHRKFMDVSQLKKHLRTHTGEKPFTCEICGKSFTAKSSLQTHIRIHRGEKPYSCGICGKSFSDSSAKRRHCILHTGKKPFSCPECNLQFARLDNLKAHLKIHSKEKHASDASSISGSSNTEEVRNILQLQPYQLSTSGEQEIQLLVTDSVHNINFMPGPSQGISIVTAESSQNMTADQAANLTLLTQQPEQLQNLILSAQQEQTEHIQSLNMIESQMGPSQTEPVHVITLSKETLEHLHAHQEQTEELHLATSTSDPAQHLQLTQEPGPPPPTHHVPQPTPLGQEQS.

The 124-residue stretch at 10–133 (GQLVVHSDAH…AYTDFQNNHS (124 aa)) folds into the BTB domain. The span at 131-142 (NHSSPKPTTLNT) shows a compositional bias: polar residues. Disordered stretches follow at residues 131-176 (NHSS…EEKS) and 209-254 (EQIA…SRYS). A DNA-binding region (a.T hook) is located at residues 159-171 (KRKRGRPKKVNTL). The span at 212 to 245 (AAKEKEESEPTCEPSREEEMPVEKDENYDPKTED) shows a compositional bias: basic and acidic residues. C2H2-type zinc fingers lie at residues 294 to 316 (ARCK…QRSH), 322 to 344 (FKCN…TRMH), 350 to 372 (YTCT…MSLH), 378 to 400 (FTCD…YRVH), 406 to 428 (PECK…LRTH), 434 to 456 (FTCE…IRIH), 462 to 484 (YSCG…CILH), and 490 to 512 (FSCP…LKIH). The tract at residues 652 to 697 (QEQTEELHLATSTSDPAQHLQLTQEPGPPPPTHHVPQPTPLGQEQS) is disordered. Pro residues predominate over residues 677–690 (PGPPPPTHHVPQPT).

It belongs to the krueppel C2H2-type zinc-finger protein family. Interacts with MN1. As to expression, widely expressed, with highest levels in naive B-cells.

It is found in the nucleus. May be involved in BMP2-induced transcription. The protein is Zinc finger and BTB domain-containing protein 24 (ZBTB24) of Homo sapiens (Human).